Reading from the N-terminus, the 144-residue chain is Maximins 11/H11 (144 aa).

The signal sequence occupies residues 1–18 (MNFKYIVAVSFLIASAYA). Residues 19-43 (RSEENDEQSLSQRDVLEEESLREIR) constitute a propeptide that is removed on maturation. N70 is modified (asparagine amide). Residues 74–123 (TAEDHEVMKRLEAVMRDLDSLDYPEEASERETRGFNQEEIANLFTKKEKR) constitute a propeptide that is removed on maturation. I143 is modified (isoleucine amide).

It belongs to the bombinin family. In terms of tissue distribution, expressed by the skin glands.

It localises to the secreted. Maximin-11 shows antimicrobial activity against bacteria and against the fungus C.albicans. It has little hemolytic activity. Functionally, maximin-H11 shows antimicrobial activity against bacteria and against the fungus C.albicans. Shows strong hemolytic activity. The chain is Maximins 11/H11 from Bombina maxima (Giant fire-bellied toad).